We begin with the raw amino-acid sequence, 258 residues long: MLAKRIIPCLDVRDGQVVKGVQFRNHEIIGDIVPLAKRYAEEGADELVFYDITASSDGRVVDKSWVSRVAEVIDIPFCVAGGIKSLEDAAKILSFGADKISINSPALADPTLITRLADRFGVQCIVVGIDTWYDAETGKYHVNQYTGDESRTRVTQWETLDWVQEVQKRGAGEIVLNMMNQDGVRNGYDLKQLKKVREVCHVPLIASGGAGTMEHFLEAFRDADVDGALAASVFHKQIINIGELKAYLATQGVEIRIC.

Active-site residues include Asp-11 and Asp-130.

The protein belongs to the HisA/HisF family. Heterodimer of HisH and HisF.

The protein resides in the cytoplasm. The catalysed reaction is 5-[(5-phospho-1-deoxy-D-ribulos-1-ylimino)methylamino]-1-(5-phospho-beta-D-ribosyl)imidazole-4-carboxamide + L-glutamine = D-erythro-1-(imidazol-4-yl)glycerol 3-phosphate + 5-amino-1-(5-phospho-beta-D-ribosyl)imidazole-4-carboxamide + L-glutamate + H(+). Its pathway is amino-acid biosynthesis; L-histidine biosynthesis; L-histidine from 5-phospho-alpha-D-ribose 1-diphosphate: step 5/9. IGPS catalyzes the conversion of PRFAR and glutamine to IGP, AICAR and glutamate. The HisF subunit catalyzes the cyclization activity that produces IGP and AICAR from PRFAR using the ammonia provided by the HisH subunit. In Escherichia coli O6:K15:H31 (strain 536 / UPEC), this protein is Imidazole glycerol phosphate synthase subunit HisF.